Reading from the N-terminus, the 167-residue chain is Crossover junction endodeoxyribonuclease RuvC (167 aa).

Residues D8, E67, and D139 contribute to the active site. The Mg(2+) site is built by D8, E67, and D139.

Belongs to the RuvC family. As to quaternary structure, homodimer which binds Holliday junction (HJ) DNA. The HJ becomes 2-fold symmetrical on binding to RuvC with unstacked arms; it has a different conformation from HJ DNA in complex with RuvA. In the full resolvosome a probable DNA-RuvA(4)-RuvB(12)-RuvC(2) complex forms which resolves the HJ. Mg(2+) serves as cofactor.

Its subcellular location is the cytoplasm. It carries out the reaction Endonucleolytic cleavage at a junction such as a reciprocal single-stranded crossover between two homologous DNA duplexes (Holliday junction).. Its function is as follows. The RuvA-RuvB-RuvC complex processes Holliday junction (HJ) DNA during genetic recombination and DNA repair. Endonuclease that resolves HJ intermediates. Cleaves cruciform DNA by making single-stranded nicks across the HJ at symmetrical positions within the homologous arms, yielding a 5'-phosphate and a 3'-hydroxyl group; requires a central core of homology in the junction. The consensus cleavage sequence is 5'-(A/T)TT(C/G)-3'. Cleavage occurs on the 3'-side of the TT dinucleotide at the point of strand exchange. HJ branch migration catalyzed by RuvA-RuvB allows RuvC to scan DNA until it finds its consensus sequence, where it cleaves and resolves the cruciform DNA. The sequence is that of Crossover junction endodeoxyribonuclease RuvC from Halorhodospira halophila (strain DSM 244 / SL1) (Ectothiorhodospira halophila (strain DSM 244 / SL1)).